The sequence spans 96 residues: Co-chaperonin GroES (96 aa).

The protein belongs to the GroES chaperonin family. Heptamer of 7 subunits arranged in a ring. Interacts with the chaperonin GroEL.

The protein localises to the cytoplasm. Together with the chaperonin GroEL, plays an essential role in assisting protein folding. The GroEL-GroES system forms a nano-cage that allows encapsulation of the non-native substrate proteins and provides a physical environment optimized to promote and accelerate protein folding. GroES binds to the apical surface of the GroEL ring, thereby capping the opening of the GroEL channel. The chain is Co-chaperonin GroES from Alteromonas mediterranea (strain DSM 17117 / CIP 110805 / LMG 28347 / Deep ecotype).